Reading from the N-terminus, the 589-residue chain is Kelch-like protein 25 (589 aa).

A BTB domain is found at 46 to 114 (TDVTLWAGDR…AYSSRIAINE (69 aa)). One can recognise a BACK domain in the interval 149–250 (CLGMMLLSDA…LPSDCLQEAV (102 aa)). 6 Kelch repeats span residues 296–340 (TLLI…AIGC), 341–388 (KVYV…ELEN), 389–444 (CLYV…SAKL), 446–492 (LFVF…VLGS), 494–538 (IFIM…ASGN), and 539–585 (KLYV…STWK).

Component of the BCR(KLHL25) E3 ubiquitin ligase complex, at least composed of CUL3, KLHL25 and RBX1.

The protein operates within protein modification; protein ubiquitination. Its function is as follows. Substrate-specific adapter of a BCR (BTB-CUL3-RBX1) E3 ubiquitin ligase complex involved in various processes, such as translation homeostasis and lipid synthesis. The BCR(KLHL25) ubiquitin ligase complex acts by mediating ubiquitination of hypophosphorylated EIF4EBP1 (4E-BP1): ubiquitination and subsequent degradation of hypophosphorylated EIF4EBP1 (4E-BP1) probably serves as a homeostatic mechanism to maintain translation and prevent eIF4E inhibition when eIF4E levels are low. The BCR(KLHL25) complex does not target EIF4EBP1 (4E-BP1) when it is hyperphosphorylated or associated with eIF4E. The BCR(KLHL25) complex also acts as a regulator of lipid synthesis by mediating ubiquitination and degradation of ACLY, thereby inhibiting lipid synthesis. BCR(KLHL25)-mediated degradation of ACLY promotes fatty acid oxidation and is required for differentiation of inducible regulatory T (iTreg) cells. This Homo sapiens (Human) protein is Kelch-like protein 25.